Reading from the N-terminus, the 530-residue chain is GMP synthase [glutamine-hydrolyzing] (530 aa).

One can recognise a Glutamine amidotransferase type-1 domain in the interval 4-205; the sequence is RILILDYGSQ…VKDICGCEGD (202 aa). Cysteine 84 acts as the Nucleophile in catalysis. Catalysis depends on residues histidine 179 and glutamate 181. The region spanning 206–398 is the GMPS ATP-PPase domain; it reads WNMPDYISEA…LGLPPQMVYR (193 aa). 233–239 provides a ligand contact to ATP; sequence SGGVDSL.

In terms of assembly, homodimer.

It carries out the reaction XMP + L-glutamine + ATP + H2O = GMP + L-glutamate + AMP + diphosphate + 2 H(+). Its pathway is purine metabolism; GMP biosynthesis; GMP from XMP (L-Gln route): step 1/1. In terms of biological role, catalyzes the synthesis of GMP from XMP. The protein is GMP synthase [glutamine-hydrolyzing] of Bordetella parapertussis (strain 12822 / ATCC BAA-587 / NCTC 13253).